Consider the following 254-residue polypeptide: rRNA N-glycosylase sapovaccarin-S1 (254 aa).

Belongs to the ribosome-inactivating protein family. Type 1 RIP subfamily. Expressed in seeds; most abundant in the perisperm.

The enzyme catalyses Endohydrolysis of the N-glycosidic bond at one specific adenosine on the 28S rRNA.. In terms of biological role, exhibits N-glycosylase activity. Catalyzes the release of one adenine from a ribosome. Acts as a ribosome-inactivating protein and inhibits protein synthesis in a rabbit-reticulocyte lysate system and in various cell lines (in vitro). Induces cell death in Huh-7 liver cells. May contribute to the protection against plant pests and predators or play a role in regulating the death of plant cells. This chain is rRNA N-glycosylase sapovaccarin-S1, found in Gypsophila vaccaria (Cow soapwort).